We begin with the raw amino-acid sequence, 125 residues long: Holo-[acyl-carrier-protein] synthase (125 aa).

Mg(2+) is bound by residues D8 and E56.

This sequence belongs to the P-Pant transferase superfamily. AcpS family. It depends on Mg(2+) as a cofactor.

It localises to the cytoplasm. The catalysed reaction is apo-[ACP] + CoA = holo-[ACP] + adenosine 3',5'-bisphosphate + H(+). Transfers the 4'-phosphopantetheine moiety from coenzyme A to a Ser of acyl-carrier-protein. In Borrelia hermsii (strain HS1 / DAH), this protein is Holo-[acyl-carrier-protein] synthase.